The primary structure comprises 321 residues: Cytochrome c biogenesis protein CcsA (321 aa).

7 helical membrane-spanning segments follow: residues 9–29 (ILTH…LITL), 44–64 (GMIA…ASSG), 68–88 (LSNL…LHMI), 143–163 (MLLS…LLMI), 226–246 (VISL…VWAN), 260–274 (TWAF…IYLH), and 289–309 (VASI…LLGI).

It belongs to the CcmF/CycK/Ccl1/NrfE/CcsA family. In terms of assembly, may interact with Ccs1.

The protein resides in the plastid. It is found in the chloroplast thylakoid membrane. Required during biogenesis of c-type cytochromes (cytochrome c6 and cytochrome f) at the step of heme attachment. The polypeptide is Cytochrome c biogenesis protein CcsA (Oryza sativa (Rice)).